Here is a 276-residue protein sequence, read N- to C-terminus: Type II pantothenate kinase (276 aa).

Residue 8 to 15 (DAGGTLTK) participates in ATP binding. The active-site Proton acceptor is Glu-76. ATP is bound by residues Thr-105, 127–131 (GGTIM), Phe-143, and Ser-230.

It belongs to the type II pantothenate kinase family. Homodimer.

It is found in the cytoplasm. It catalyses the reaction (R)-pantothenate + ATP = (R)-4'-phosphopantothenate + ADP + H(+). Its pathway is cofactor biosynthesis; coenzyme A biosynthesis; CoA from (R)-pantothenate: step 1/5. In terms of biological role, catalyzes the phosphorylation of pantothenate (Pan), the first step in CoA biosynthesis. In Bacillus thuringiensis subsp. konkukian (strain 97-27), this protein is Type II pantothenate kinase.